We begin with the raw amino-acid sequence, 329 residues long: Malate dehydrogenase (329 aa).

11–17 (GAAGQIA) contributes to the NAD(+) binding site. Residues R92 and R98 each coordinate substrate. Residues N105, Q112, and 129–131 (VGN) each bind NAD(+). Substrate-binding residues include N131 and R162. H187 (proton acceptor) is an active-site residue.

This sequence belongs to the LDH/MDH superfamily. MDH type 2 family.

It catalyses the reaction (S)-malate + NAD(+) = oxaloacetate + NADH + H(+). Its function is as follows. Catalyzes the reversible oxidation of malate to oxaloacetate. The polypeptide is Malate dehydrogenase (Akkermansia muciniphila (strain ATCC BAA-835 / DSM 22959 / JCM 33894 / BCRC 81048 / CCUG 64013 / CIP 107961 / Muc)).